The chain runs to 544 residues: Chaperonin GroEL 1 (544 aa).

Residues 29–32 (TLGP), 86–90 (DGTTT), Gly-413, and Asp-495 contribute to the ATP site.

This sequence belongs to the chaperonin (HSP60) family. Forms a cylinder of 14 subunits composed of two heptameric rings stacked back-to-back. Interacts with the co-chaperonin GroES.

The protein resides in the cytoplasm. It carries out the reaction ATP + H2O + a folded polypeptide = ADP + phosphate + an unfolded polypeptide.. In terms of biological role, together with its co-chaperonin GroES, plays an essential role in assisting protein folding. The GroEL-GroES system forms a nano-cage that allows encapsulation of the non-native substrate proteins and provides a physical environment optimized to promote and accelerate protein folding. The sequence is that of Chaperonin GroEL 1 from Synechococcus sp. (strain ATCC 27144 / PCC 6301 / SAUG 1402/1) (Anacystis nidulans).